Consider the following 544-residue polypeptide: Serine/threonine-protein kinase PAK 1 (544 aa).

The tract at residues 1–79 is disordered; that stretch reads MSNNGLDVQD…KERPEISLPS (79 aa). Residue Ser-2 is modified to N-acetylserine. Ser-21 is modified (phosphoserine; by PKB and autocatalysis). Ser-57 is subject to Phosphoserine; by autocatalysis. A compositionally biased stretch (basic and acidic residues) spans 68 to 79; it reads KEKERPEISLPS. The tract at residues 70–140 is autoregulatory region; that stretch reads KERPEISLPS…YNSKKTSNSQ (71 aa). The CRIB domain occupies 75–88; sequence ISLPSDFEHTIHVG. The GTPase-binding stretch occupies residues 75–105; that stretch reads ISLPSDFEHTIHVGFDAVTGEFTGMPEQWAR. Residue Thr-84 is modified to Phosphothreonine; by OXSR1. The residue at position 115 (Ser-115) is a Phosphoserine. Phosphotyrosine occurs at positions 131 and 142. Phosphoserine; by autocatalysis occurs at positions 144 and 149. A compositionally biased stretch (polar residues) spans 150–166; sequence AEDYNSSNTLNVKTVSE. Residues 150-195 are disordered; sequence AEDYNSSNTLNVKTVSETPAVPPVSEDEDDDDDATPPPVIAPRPEH. Tyr-153 is modified (phosphotyrosine; by JAK2). Residue Ser-174 is modified to Phosphoserine. Acidic residues predominate over residues 174–183; sequence SEDEDDDDDA. Thr-184 is modified (phosphothreonine). Residue Ser-198 is modified to Phosphoserine; by autocatalysis. At Tyr-200 the chain carries Phosphotyrosine; by JAK2. The residue at position 203 (Ser-203) is a Phosphoserine; by autocatalysis. The interval 209–250 is disordered; the sequence is PVTPTRDVATSPISPTENNTTPPDALTRNTEKQKKKPKMSDE. Residues Thr-211 and Thr-218 each carry the phosphothreonine modification. Phosphoserine is present on residues Ser-219 and Ser-222. Over residues 219 to 230 the composition is skewed to polar residues; that stretch reads SPISPTENNTTP. A phosphothreonine mark is found at Thr-224, Thr-228, and Thr-229. Residues 269–520 form the Protein kinase domain; it reads YTRFEKIGQG…AKELLQHQFL (252 aa). 275–283 is an ATP binding site; the sequence is IGQGASGTV. Position 284 is a phosphotyrosine; by JAK2 (Tyr-284). ATP is bound at residue Lys-298. Asp-388 functions as the Proton acceptor in the catalytic mechanism. Residue Thr-422 is modified to Phosphothreonine; by autocatalysis, BRSK2 and PDPK1.

The protein belongs to the protein kinase superfamily. STE Ser/Thr protein kinase family. STE20 subfamily. As to quaternary structure, homodimer in its autoinhibited state. Active as monomer. Interacts with GIT1. Component of cytoplasmic complexes, which also contains PXN, ARHGEF7 and GIT1. Interacts with NISCH. Interacts with DVL1; mediates the formation of a DVL1, MUSK and PAK1 ternary complex involved in AChR clustering. Binds to the caspase-cleaved p110 isoform of CDC2L1 and CDC2L2, p110C, but not the full-length proteins. Interacts with ARHGEF7. Interacts with SCRIB. Interacts with PDPK1. Interacts (via kinase domain) with RAF1. Interacts with NCK1 and NCK2. Interacts with TBCB. Interacts with BRSK2. Interacts tightly with GTP-bound but not GDP-bound CDC42/P21 and RAC1. Interacts with SNAI1. Interacts with CIB1 (via N-terminal region); the interaction is direct, promotes PAK1 activity and occurs in a calcium-dependent manner. Interacts with INPP5K. Interacts with gamma-tubulin. Interacts with RHOU; the interaction promotes PAK1 activation. Mg(2+) is required as a cofactor. Autophosphorylated in trans, meaning that in a dimer, one kinase molecule phosphorylates the other one. Activated by autophosphorylation at Thr-422 in response to a conformation change, triggered by interaction with GTP-bound CDC42 or RAC1. Activated by phosphorylation at Thr-422 by PDPK1. Phosphorylated by JAK2 in response to PRL; this increases PAK1 kinase activity. Phosphorylated at Ser-21 by PKB/AKT; this reduces interaction with NCK1 and association with focal adhesion sites. Activated by phosphorylation at Thr-422 by BRSK2. Upon DNA damage, phosphorylated at Thr-211 and translocates to the nucleoplasm. Phosphorylated at tyrosine residues, which can be enhanced by NTN1. In terms of tissue distribution, expressed predominantly in the brain, with higher expression in neuronal groups associated with motor function, and at lower levels in the spleen.

It localises to the cytoplasm. It is found in the cell junction. The protein resides in the focal adhesion. The protein localises to the cell projection. Its subcellular location is the lamellipodium. It localises to the cell membrane. It is found in the ruffle membrane. The protein resides in the invadopodium. The protein localises to the nucleus. Its subcellular location is the nucleoplasm. It localises to the chromosome. It is found in the cytoskeleton. The protein resides in the microtubule organizing center. The protein localises to the centrosome. It catalyses the reaction L-seryl-[protein] + ATP = O-phospho-L-seryl-[protein] + ADP + H(+). The enzyme catalyses L-threonyl-[protein] + ATP = O-phospho-L-threonyl-[protein] + ADP + H(+). Its activity is regulated as follows. Phosphorylation of Thr-84 by OXSR1 inhibits activation. Activated by binding small G proteins. Binding of GTP-bound CDC42 or RAC1 to the autoregulatory region releases monomers from the autoinhibited dimer, and enables activation by phosphorylation of Thr-422. Its function is as follows. Protein kinase involved in intracellular signaling pathways downstream of integrins and receptor-type kinases that plays an important role in cytoskeleton dynamics, in cell adhesion, migration, proliferation, apoptosis, mitosis, and in vesicle-mediated transport processes. Can directly phosphorylate BAD and protects cells against apoptosis. Activated by interaction with CDC42 and RAC1. Functions as a GTPase effector that links the Rho-related GTPases CDC42 and RAC1 to the JNK MAP kinase pathway. Phosphorylates and activates MAP2K1, and thereby mediates activation of downstream MAP kinases. Involved in the reorganization of the actin cytoskeleton, actin stress fibers and of focal adhesion complexes. Phosphorylates the tubulin chaperone TBCB and thereby plays a role in the regulation of microtubule biogenesis and organization of the tubulin cytoskeleton. Plays a role in the regulation of insulin secretion in response to elevated glucose levels. Part of a ternary complex that contains PAK1, DVL1 and MUSK that is important for MUSK-dependent regulation of AChR clustering during the formation of the neuromuscular junction (NMJ). Activity is inhibited in cells undergoing apoptosis, potentially due to binding of CDC2L1 and CDC2L2. Phosphorylates MYL9/MLC2. Phosphorylates RAF1 at 'Ser-338' and 'Ser-339' resulting in: activation of RAF1, stimulation of RAF1 translocation to mitochondria, phosphorylation of BAD by RAF1, and RAF1 binding to BCL2. Phosphorylates SNAI1 at 'Ser-246' promoting its transcriptional repressor activity by increasing its accumulation in the nucleus. In podocytes, promotes NR3C2 nuclear localization. Required for atypical chemokine receptor ACKR2-induced phosphorylation of LIMK1 and cofilin (CFL1) and for the up-regulation of ACKR2 from endosomal compartment to cell membrane, increasing its efficiency in chemokine uptake and degradation. In synapses, seems to mediate the regulation of F-actin cluster formation performed by SHANK3, maybe through CFL1 phosphorylation and inactivation. Plays a role in RUFY3-mediated facilitating gastric cancer cells migration and invasion. In response to DNA damage, phosphorylates MORC2 which activates its ATPase activity and facilitates chromatin remodeling. In neurons, plays a crucial role in regulating GABA(A) receptor synaptic stability and hence GABAergic inhibitory synaptic transmission through its role in F-actin stabilization. In hippocampal neurons, necessary for the formation of dendritic spines and excitatory synapses; this function is dependent on kinase activity and may be exerted by the regulation of actomyosin contractility through the phosphorylation of myosin II regulatory light chain (MLC). Along with GIT1, positively regulates microtubule nucleation during interphase. Phosphorylates FXR1, promoting its localization to stress granules and activity. Phosphorylates ILK on 'Thr-173' and 'Ser-246', promoting nuclear export of ILK. The polypeptide is Serine/threonine-protein kinase PAK 1 (Rattus norvegicus (Rat)).